Here is a 419-residue protein sequence, read N- to C-terminus: Delta(8)-fatty-acid desaturase (419 aa).

Residues 1–64 (MKSKRQALSP…LKRMPKINPS (64 aa)) form the Cytochrome b5 heme-binding domain. Residues His-24 and His-47 each coordinate heme. Residues 110–130 (LGVLGYFLMVQYQMYFIGAVL) form a helical membrane-spanning segment. A Histidine box-1 motif is present at residues 143 to 147 (HDICH). A helical transmembrane segment spans residues 156–176 (WNNLVGLVFGNGLQGFSVTCW). The Histidine box-2 motif lies at 180 to 184 (HNAHH). 3 consecutive transmembrane segments (helical) span residues 226 to 246 (YFLVICILLRFIWCFQCVLTV), 266 to 286 (IGLALHWTLKALFHLFFMPSI), and 290 to 310 (LLVFFVSELVGGFGIAIVVFM). The short motif at 355 to 359 (QIEHH) is the Histidine box-3 element.

It belongs to the fatty acid desaturase type 1 family. It depends on Fe cation as a cofactor.

The protein localises to the membrane. It carries out the reaction an (11Z,14Z)-icosadienoyl-containing glycerolipid + 2 Fe(II)-[cytochrome b5] + O2 + 2 H(+) = an (8Z,11Z,14Z)-icosatrienoyl-containing glycerolipid + 2 Fe(III)-[cytochrome b5] + 2 H2O. The enzyme catalyses an (11Z,14Z,17Z)-icosatrienoyl-containing glycerolipid + 2 Fe(II)-[cytochrome b5] + O2 + 2 H(+) = an (8Z,11Z,14Z,17Z)-eicosatetraenoyl-containing glycerolipid + 2 Fe(III)-[cytochrome b5] + 2 H2O. The catalysed reaction is an (11Z)-eicosenoyl-containing glycerolipid + 2 Fe(II)-[cytochrome b5] + O2 + 2 H(+) = a (8Z,11Z)-eicosadienoyl-containing glycerolipid + 2 Fe(III)-[cytochrome b5] + 2 H2O. It participates in lipid metabolism; fatty acid metabolism. Its function is as follows. Delta(8)-fatty-acid desaturase which introduces a double bond at the 8-position in 20-carbon chain length fatty acids (C20) that have an existing delta-11 unsaturation (double bond). Whether it acts on CoA-linked substrates (as in animals) or phospholipid-linked substrates (as in plants and fungi) is still not clear. This chain is Delta(8)-fatty-acid desaturase (efd1), found in Euglena gracilis.